A 393-amino-acid chain; its full sequence is Endoglucanase 1 (393 aa).

An N-terminal signal peptide occupies residues 1 to 26 (MAFKLNIGLLALSLSLSLVHLDGVRA). D34 functions as the Nucleophile in the catalytic mechanism. D152 serves as the catalytic Proton donor. Residues 233–393 (GCQRKDDNTI…GGHKKCHKKH (161 aa)) are disordered. Low complexity-rich tracts occupy residues 319–329 (QGSSNGDATTG) and 337–370 (DSGSTANGSGSGAPTSGSDGSAVAPPSGGSNPGA). N-linked (GlcNAc...) asparagine glycosylation is present at N343. Over residues 371–384 (AQGGQGGAQPGPSG) the composition is skewed to gly residues.

This sequence belongs to the glycosyl hydrolase 45 (cellulase K) family. Post-translationally, may also be O-glycosylated. In terms of tissue distribution, hyphal tip.

It is found in the secreted. It catalyses the reaction Endohydrolysis of (1-&gt;4)-beta-D-glucosidic linkages in cellulose, lichenin and cereal beta-D-glucans.. This Mycosarcoma maydis (Corn smut fungus) protein is Endoglucanase 1 (EGL1).